The primary structure comprises 327 residues: Zinc transport protein ZntB (327 aa).

Residues 1–273 (MEGIKGSEVN…SRRTYTMSLM (273 aa)) are Cytoplasmic-facing. The helical transmembrane segment at 274–294 (AMVFLPSTFLTGLFGVNLGGI) threads the bilayer. Residues 295 to 300 (PGGGYQ) are Periplasmic-facing. Residues 301–321 (FGFSAFCIMLVVLIGGVAWWL) form a helical membrane-spanning segment. The Cytoplasmic segment spans residues 322–327 (HRSKWL).

The protein belongs to the CorA metal ion transporter (MIT) (TC 1.A.35) family.

It localises to the cell inner membrane. It carries out the reaction Zn(2+)(out) + H(+)(out) = Zn(2+)(in) + H(+)(in). In terms of biological role, zinc transporter. Acts as a Zn(2+):proton symporter, which likely mediates zinc ion uptake. This chain is Zinc transport protein ZntB, found in Enterobacter sp. (strain 638).